Here is a 341-residue protein sequence, read N- to C-terminus: tRNA N6-adenosine threonylcarbamoyltransferase (341 aa).

Fe cation contacts are provided by His-113 and His-117. Substrate is bound by residues 141-145, Asp-174, Gly-187, and Asn-282; that span reads LVSGG. A Fe cation-binding site is contributed by Asp-310.

This sequence belongs to the KAE1 / TsaD family. The cofactor is Fe(2+).

The protein localises to the cytoplasm. The enzyme catalyses L-threonylcarbamoyladenylate + adenosine(37) in tRNA = N(6)-L-threonylcarbamoyladenosine(37) in tRNA + AMP + H(+). Its function is as follows. Required for the formation of a threonylcarbamoyl group on adenosine at position 37 (t(6)A37) in tRNAs that read codons beginning with adenine. Is involved in the transfer of the threonylcarbamoyl moiety of threonylcarbamoyl-AMP (TC-AMP) to the N6 group of A37, together with TsaE and TsaB. TsaD likely plays a direct catalytic role in this reaction. The protein is tRNA N6-adenosine threonylcarbamoyltransferase of Porphyromonas gingivalis (strain ATCC BAA-308 / W83).